A 76-amino-acid chain; its full sequence is MDSTNARSGMKSRKKKPKTTVIDEDDCMTCSVCQSKLVKISDITKVSLDYINTMRGNTLACTACGSSLKLLNDFAS.

The protein belongs to the orthopoxvirus OPG146 family. As to quaternary structure, interacts with capping enzyme RAP94/OPG109, the two large RNA polymerase subunits RPO147/OPG105 and RPO132/OPG151, the two early transcription factor subunits OPG185 and OPG133, one of the capping enzyme subunits OPG113, the nucleoside triphosphate phosphohydrolase OPG123, two core proteins OPG129 and OPG138, and a virion protein OPG064.

The protein resides in the virion. The protein localises to the host cytoplasm. Its subcellular location is the host nucleus. Plays a role in the maturation of immature virions to infectious particles. May also participate in viral transcription. This is Protein OPG146 (OPG146) from Variola virus (isolate Human/India/Ind3/1967) (VARV).